The chain runs to 458 residues: Ribosomal protein uS12 methylthiotransferase RimO (458 aa).

Positions 8–119 constitute an MTTase N-terminal domain; the sequence is PTVAFAHLGC…IVDVLQRVEV (112 aa). Residues cysteine 17, cysteine 53, cysteine 82, cysteine 157, cysteine 161, and cysteine 164 each coordinate [4Fe-4S] cluster. The 230-residue stretch at 143 to 372 folds into the Radical SAM core domain; that stretch reads TTDQAVAFLK…MALQQPISAE (230 aa). In terms of domain architecture, TRAM spans 375 to 446; it reads SRWVGRTVDV…IYDLNGQMVG (72 aa).

The protein belongs to the methylthiotransferase family. RimO subfamily. It depends on [4Fe-4S] cluster as a cofactor.

It is found in the cytoplasm. The catalysed reaction is L-aspartate(89)-[ribosomal protein uS12]-hydrogen + (sulfur carrier)-SH + AH2 + 2 S-adenosyl-L-methionine = 3-methylsulfanyl-L-aspartate(89)-[ribosomal protein uS12]-hydrogen + (sulfur carrier)-H + 5'-deoxyadenosine + L-methionine + A + S-adenosyl-L-homocysteine + 2 H(+). Catalyzes the methylthiolation of an aspartic acid residue of ribosomal protein uS12. This is Ribosomal protein uS12 methylthiotransferase RimO from Synechococcus sp. (strain CC9605).